A 1059-amino-acid chain; its full sequence is Zinc finger protein 628 (1059 aa).

C2H2-type zinc fingers lie at residues 36 to 58 (YECG…QRTH), 64 to 86 (YKCP…QRGH), 92 to 114 (YQCP…RSVH), 120 to 142 (FICG…LRQH), 148 to 170 (YPCP…RHVH), and 176 to 198 (YTCG…QRVH). The residue at position 199 (Thr199) is a Phosphothreonine. The segment at 204–226 (FRCPLCPKTFTHSSNLLLHQRTH) adopts a C2H2-type 7 zinc-finger fold. Disordered regions lie at residues 226-247 (HGAA…REPG), 260-280 (LQPH…PVVP), and 312-351 (EHQP…PAAA). Low complexity predominate over residues 228–237 (AAPAPGTASA). Positions 263–279 (HSPPAPPAPPPPPPPVV) are enriched in pro residues. The segment covering 323–335 (PQPQEAPAEAPKA) has biased composition (low complexity). Positions 336–351 (DQPPSPLPQPPPPAAA) are enriched in pro residues. 7 C2H2-type zinc fingers span residues 356-378 (FACL…QHSH), 386-408 (FRCG…QQCH), 454-476 (YKCA…LRDH), 482-504 (YQCG…QRVH), 510-532 (FTCG…LRLH), 538-560 (YACG…RHVH), and 566-588 (HACG…QRVH). A Phosphothreonine modification is found at Thr589. C2H2-type zinc fingers lie at residues 594–616 (FRCP…QRTH) and 622–644 (FTCP…LRTH). The span at 644 to 658 (HAPANTPPSTTAPAA) shows a compositional bias: low complexity. Positions 644 to 674 (HAPANTPPSTTAPAAGPQPPAPLAAARAPPA) are disordered. 4 tandem repeats follow at residues 818–831 (VQLQ…EVTT), 832–842 (VQLQPAQEVTT), 843–853 (VQLQPAQEVTT), and 854–864 (VQLQPAQEVTT). Residues 818 to 864 (VQLQPLRPAPEVTTVQLQPAQEVTTVQLQPAQEVTTVQLQPAQEVTT) are 4 X approximate tandem repeats. Residues 943-1059 (DGEQTRLCVQ…LPAVQLVHTF (117 aa)) are interaction with TAF4B.

As to quaternary structure, interacts with TAF4B.

It localises to the nucleus. In terms of biological role, transcriptional activator. Binds DNA on GT-box consensus sequence 5'-TTGGTT-3'. Plays a role in spermiogenesis. This is Zinc finger protein 628 (ZNF628) from Homo sapiens (Human).